The following is a 378-amino-acid chain: Polygalacturonase (378 aa).

The N-terminal stretch at 1–20 (MILTRSVVLGFLGSASLALA) is a signal peptide. The cysteines at positions 39 and 57 are disulfide-linked. PbH1 repeat units lie at residues 172 to 203 (SSGL…DIGD), 204 to 225 (SDSI…AINS), 226 to 246 (GTNI…SIGS), 255 to 276 (VETV…RVKA), and 284 to 306 (IKGV…TIRQ). Asp-218 serves as the catalytic Proton donor. The cysteines at positions 220 and 236 are disulfide-linked. Residue His-240 is part of the active site. 2 disulfides stabilise this stretch: Cys-346-Cys-352 and Cys-370-Cys-378.

This sequence belongs to the glycosyl hydrolase 28 family.

The protein localises to the secreted. The catalysed reaction is (1,4-alpha-D-galacturonosyl)n+m + H2O = (1,4-alpha-D-galacturonosyl)n + (1,4-alpha-D-galacturonosyl)m.. In Penicillium expansum (Blue mold rot fungus), this protein is Polygalacturonase (PEPG1).